The sequence spans 377 residues: Alanine racemase (377 aa).

Lys37 functions as the Proton acceptor; specific for D-alanine in the catalytic mechanism. Lys37 is modified (N6-(pyridoxal phosphate)lysine). Arg135 contributes to the substrate binding site. Residue Tyr271 is the Proton acceptor; specific for L-alanine of the active site. Residue Met319 coordinates substrate.

The protein belongs to the alanine racemase family. The cofactor is pyridoxal 5'-phosphate.

The enzyme catalyses L-alanine = D-alanine. Its pathway is amino-acid biosynthesis; D-alanine biosynthesis; D-alanine from L-alanine: step 1/1. In terms of biological role, catalyzes the interconversion of L-alanine and D-alanine. May also act on other amino acids. In Helicobacter pylori (strain Shi470), this protein is Alanine racemase (alr).